The sequence spans 2027 residues: Dedicator of cytokinesis protein 3 (2027 aa).

The region spanning 6-67 (EEEKYGVVIC…PANYIHLKKA (62 aa)) is the SH3 domain. Residues 421–598 (RNDLYLTLEK…ESFFISTQLS (178 aa)) enclose the C2 DOCK-type domain. Positions 1225 to 1632 (KSEINKEEMY…LYHEFPGLDK (408 aa)) constitute a DOCKER domain. S1655 bears the Phosphoserine mark. 4 disordered regions span residues 1672-1695 (GTGR…MMMM), 1731-1768 (SSSQ…SLPD), 1846-1925 (DTPP…DEGL), and 1971-2027 (PPKP…RGEQ). Low complexity-rich tracts occupy residues 1676 to 1695 (HSSS…MMMM) and 1731 to 1751 (SSSQ…APSQ). Polar residues predominate over residues 1752-1763 (MITSAPSSTRGS). Residues 1877-1899 (GSNSTLSGSASSGVSSLSESNFG) show a composition bias toward low complexity. The SH3-binding motif lies at 1967–1973 (PPALPPK). Composition is skewed to basic and acidic residues over residues 1981–1998 (ALEH…ERPR) and 2011–2027 (VKEE…RGEQ).

It belongs to the DOCK family. In terms of assembly, interacts with presenilin proteins PSEN1 and PSEN2. Interacts with CRK. In terms of tissue distribution, expressed in brain, spinal cord, pituitary gland, testis. Not expressed in heart, liver, kidney, spleen and lung. In brain, it is highly expressed in the cerebral cortex and hippocampus, while it is absent in other tissues, except in spinal cord. In the cerebral cortex, it is found within the intermediate (III and IV) and deep (V and VI) layers, whereas it is weakly expressed in superficial layer I. It is also abundant in the piriform cortex. Within the hippocampus, it is expressed in the pyramidal neurons of the CA1, CA2, and CA3 regions and the dentate gyrus.

Its subcellular location is the cytoplasm. Potential guanine nucleotide exchange factor (GEF). GEF proteins activate some small GTPases by exchanging bound GDP for free GTP. Its interaction with presenilin proteins as well as its ability to stimulate Tau/MAPT phosphorylation suggest that it may be involved in Alzheimer disease. Ectopic expression in nerve cells decreases the secretion of amyloid-beta APBA1 protein and lowers the rate of cell-substratum adhesion, suggesting that it may affect the function of some small GTPase involved in the regulation of actin cytoskeleton or cell adhesion receptors. The chain is Dedicator of cytokinesis protein 3 (Dock3) from Mus musculus (Mouse).